We begin with the raw amino-acid sequence, 208 residues long: Uracil phosphoribosyltransferase (208 aa).

5-phospho-alpha-D-ribose 1-diphosphate contacts are provided by residues Arg-78, Arg-103, and 130 to 138 (DPMFATGGT). Uracil contacts are provided by residues Ile-193 and 198–200 (GDA). Asp-199 is a binding site for 5-phospho-alpha-D-ribose 1-diphosphate.

It belongs to the UPRTase family. The cofactor is Mg(2+).

The catalysed reaction is UMP + diphosphate = 5-phospho-alpha-D-ribose 1-diphosphate + uracil. Its pathway is pyrimidine metabolism; UMP biosynthesis via salvage pathway; UMP from uracil: step 1/1. Allosterically activated by GTP. In terms of biological role, catalyzes the conversion of uracil and 5-phospho-alpha-D-ribose 1-diphosphate (PRPP) to UMP and diphosphate. The protein is Uracil phosphoribosyltransferase of Campylobacter curvus (strain 525.92).